A 131-amino-acid polypeptide reads, in one-letter code: D-ribose pyranase (131 aa).

Residue His-20 is the Proton donor of the active site. Substrate-binding positions include Asp-28, His-98, and 120–122 (YAN).

This sequence belongs to the RbsD / FucU family. RbsD subfamily. Homodecamer.

The protein localises to the cytoplasm. The enzyme catalyses beta-D-ribopyranose = beta-D-ribofuranose. The protein operates within carbohydrate metabolism; D-ribose degradation; D-ribose 5-phosphate from beta-D-ribopyranose: step 1/2. Functionally, catalyzes the interconversion of beta-pyran and beta-furan forms of D-ribose. The chain is D-ribose pyranase from Bacillus cereus (strain ATCC 14579 / DSM 31 / CCUG 7414 / JCM 2152 / NBRC 15305 / NCIMB 9373 / NCTC 2599 / NRRL B-3711).